Consider the following 412-residue polypeptide: Phospholipase A1-IIdelta (412 aa).

At A2 the chain carries N-acetylalanine. The active-site Acyl-ester intermediate is S238. Residues S238, D297, and H336 each act as charge relay system in the active site.

The protein belongs to the AB hydrolase superfamily. Lipase family. In terms of tissue distribution, expressed in leaves, stems, flowers and siliques, and, at low levels, in seeds and roots (at protein level).

It localises to the cytoplasm. Functionally, acylhydrolase that catalyzes the hydrolysis of phosphatidylcholine (PC) at the sn-1 position. High activity toward PC, medium activity toward monogalactosyldiacylglycerol (MGDG) and low activity toward triacylglycerol (TAG). Confers sensitivity to UV-B radiation probably by deesterifying membrane phospholipids. This Arabidopsis thaliana (Mouse-ear cress) protein is Phospholipase A1-IIdelta.